A 419-amino-acid chain; its full sequence is UDP-N-acetylglucosamine 1-carboxyvinyltransferase (419 aa).

22–23 (KN) lines the phosphoenolpyruvate pocket. Arg92 serves as a coordination point for UDP-N-acetyl-alpha-D-glucosamine. The Proton donor role is filled by Cys116. A 2-(S-cysteinyl)pyruvic acid O-phosphothioketal modification is found at Cys116. Positions 307 and 329 each coordinate UDP-N-acetyl-alpha-D-glucosamine.

Belongs to the EPSP synthase family. MurA subfamily.

The protein localises to the cytoplasm. The catalysed reaction is phosphoenolpyruvate + UDP-N-acetyl-alpha-D-glucosamine = UDP-N-acetyl-3-O-(1-carboxyvinyl)-alpha-D-glucosamine + phosphate. Its pathway is cell wall biogenesis; peptidoglycan biosynthesis. Functionally, cell wall formation. Adds enolpyruvyl to UDP-N-acetylglucosamine. The polypeptide is UDP-N-acetylglucosamine 1-carboxyvinyltransferase (Pseudothermotoga lettingae (strain ATCC BAA-301 / DSM 14385 / NBRC 107922 / TMO) (Thermotoga lettingae)).